A 537-amino-acid chain; its full sequence is Beta-galactoside alpha-2,6-sialyltransferase 2 (537 aa).

At 1–10 (MKSWVRQGRR) the chain is on the cytoplasmic side. Residues 11–31 (LVLVGMLAWVLLFLALLSYFL) form a helical; Signal-anchor for type II membrane protein membrane-spanning segment. The Lumenal portion of the chain corresponds to 32 to 537 (DARVNEPLTS…PGFSTVDCDI (506 aa)). Disordered stretches follow at residues 83–117 (TRDE…PEGI) and 134–202 (GTEN…GDSS). The span at 134–145 (GTENIGSQSDPV) shows a compositional bias: polar residues. A compositionally biased stretch (acidic residues) spans 166 to 185 (EEEEEEEEEEERQENEDEDV). Intrachain disulfides connect Cys-265/Cys-535, Cys-312/Cys-464, and Cys-482/Cys-493. Asn-353 and Asn-373 each carry an N-linked (GlcNAc...) asparagine glycan.

It belongs to the glycosyltransferase 29 family.

The protein resides in the golgi apparatus. It localises to the golgi stack membrane. The enzyme catalyses a beta-D-galactoside + CMP-N-acetyl-beta-neuraminate = an N-acetyl-alpha-neuraminyl-(2-&gt;6)-beta-D-galactosyl derivative + CMP + H(+). In terms of biological role, transfers sialic acid from the donor of substrate CMP-sialic acid to galactose containing acceptor substrates. This Takifugu rubripes (Japanese pufferfish) protein is Beta-galactoside alpha-2,6-sialyltransferase 2 (st6gal2).